The following is a 389-amino-acid chain: 2-deoxystreptamine N-acetyl-D-glucosaminyltransferase (389 aa).

This sequence belongs to the glycosyltransferase group 1 family.

The enzyme catalyses 2-deoxystreptamine + UDP-N-acetyl-alpha-D-glucosamine = 2'-N-acetylparomamine + UDP + H(+). It participates in antibiotic biosynthesis; butirosin biosynthesis. Functionally, glycosyltransferase involved in the biosynthesis of butirosin by mediating conversion of 2-deoxystreptamine (2-DOS) to 2'-N-acetylparomamine using UDP-alpha-D-glucosamine as sugar donor. In Niallia circulans (Bacillus circulans), this protein is 2-deoxystreptamine N-acetyl-D-glucosaminyltransferase (btrM).